Here is a 1262-residue protein sequence, read N- to C-terminus: Protein stoned-B (1262 aa).

Short sequence motifs (NPF) lie at residues 3 to 5 (NPF), 19 to 21 (NPF), 33 to 35 (NPF), and 43 to 45 (NPF). The segment at 17–36 (AANPFLMQSEPEPSSDNPFM) is disordered. Positions 49–189 (ADDLELGAEP…DVSVDSGSSA (141 aa)) are disordered. Positions 50–60 (DDLELGAEPEA) are enriched in acidic residues. Residues 101 to 111 (PPQSQPQLQSH) show a composition bias toward low complexity. A compositionally biased stretch (pro residues) spans 115 to 124 (HPPPPRPLVP). Over residues 128 to 145 (TQDLISTVSSQLDETSSE) the composition is skewed to polar residues. Residues 172–189 (DSGLADLLDVSVDSGSSA) are compositionally biased toward low complexity. An NPF 5 motif is present at residues 210-212 (NPF). 2 disordered regions span residues 225–452 (VPLP…SPPT) and 474–507 (EEMDTGLDFPLASSGQLSANPFASPDEEEPNFAP). A compositionally biased stretch (pro residues) spans 233–272 (KQPPRPPPPRPAPPRPAPPGQAAPQRPPPPLAAVNPPPAA). Positions 325–345 (DLDETIGEGEPPEQEEPDTEQ) are enriched in acidic residues. A compositionally biased stretch (polar residues) spans 384–401 (QVNNMAAPSGTASTQRAT). Positions 417 to 429 (DDEDEPEAMQEPE) are enriched in acidic residues. Positions 493–495 (NPF) match the NPF 6 motif. 2 positions are modified to phosphoserine: S623 and S626. Residues 643–709 (SGVAPQLAPP…QDTPQTPLYD (67 aa)) form a disordered region. An NPF 7 motif is present at residues 673-675 (NPF). Residues 728-902 (GWEMQLRQPN…KIPALRERAL (175 aa)) form the SHD domain. The interval 847–1108 (KEFGSDLKKL…KGIERILGAV (262 aa)) is interaction with Syt. The 314-residue stretch at 906 to 1219 (MEEVQVTAVD…ARHEYKVGIE (314 aa)) folds into the MHD domain. A disordered region spans residues 1226–1262 (TNAYLAATRPIREEPPTTATKPTASPVAPSDSDTDSN). Residues 1241 to 1254 (PTTATKPTASPVAP) show a composition bias toward low complexity.

The protein belongs to the Stoned B family. Interacts with the second C2 domain of Syt.

Its subcellular location is the cytoplasm. It is found in the synapse. In terms of biological role, adapter protein involved in endocytic recycling of synaptic vesicles membranes. May act by mediating the retrieval of synaptotagmin protein Syt from the plasma membrane, thereby facilitating the internalization of multiple synaptic vesicles from the plasma membrane. This chain is Protein stoned-B (stnB), found in Drosophila melanogaster (Fruit fly).